The sequence spans 617 residues: COMPASS component cclA (617 aa).

2 stretches are compositionally biased toward low complexity: residues 1-19 (MASIQPAGSSAPSSNINSP) and 40-50 (SSPAPASNASA). The tract at residues 1-89 (MASIQPAGSS…AKKRATAVQN (89 aa)) is disordered. Basic residues predominate over residues 57–69 (SKRNKRDSRKKRE). Positions 157 to 380 (IADTSFPHIK…YAFNLKETPT (224 aa)) constitute a B30.2/SPRY domain. The segment at 595–617 (TPNTEEPAARPENITVGHDVEMS) is disordered.

This sequence belongs to the cclA family. In terms of assembly, component of the COMPASS complex.

It localises to the nucleus. The protein localises to the chromosome. Its subcellular location is the telomere. Functionally, component of the COMPASS (Set1C) complex that specifically mono-, di- and trimethylates histone H3 to form H3K4me1/2/3, which subsequently plays a role in telomere length maintenance and transcription elongation regulation. Controls the production of several secondary metabolites, including astellolides. In Aspergillus oryzae (strain ATCC 42149 / RIB 40) (Yellow koji mold), this protein is COMPASS component cclA.